We begin with the raw amino-acid sequence, 487 residues long: ATP synthase subunit beta, plastid (487 aa).

169–176 (GGAGVGKT) serves as a coordination point for ATP.

The protein belongs to the ATPase alpha/beta chains family. F-type ATPases have 2 components, CF(1) - the catalytic core - and CF(0) - the membrane proton channel. CF(1) has five subunits: alpha(3), beta(3), gamma(1), delta(1), epsilon(1). CF(0) has four main subunits: a(1), b(1), b'(1) and c(9-12).

It localises to the plastid membrane. The catalysed reaction is ATP + H2O + 4 H(+)(in) = ADP + phosphate + 5 H(+)(out). Its function is as follows. Produces ATP from ADP in the presence of a proton gradient across the membrane. The catalytic sites are hosted primarily by the beta subunits. This chain is ATP synthase subunit beta, plastid (atpB), found in Cuscuta pentagona (Five-angled dodder).